We begin with the raw amino-acid sequence, 195 residues long: 3-isopropylmalate dehydratase small subunit (195 aa).

This sequence belongs to the LeuD family. LeuD type 1 subfamily. In terms of assembly, heterodimer of LeuC and LeuD.

The enzyme catalyses (2R,3S)-3-isopropylmalate = (2S)-2-isopropylmalate. It participates in amino-acid biosynthesis; L-leucine biosynthesis; L-leucine from 3-methyl-2-oxobutanoate: step 2/4. In terms of biological role, catalyzes the isomerization between 2-isopropylmalate and 3-isopropylmalate, via the formation of 2-isopropylmaleate. This chain is 3-isopropylmalate dehydratase small subunit, found in Salinispora tropica (strain ATCC BAA-916 / DSM 44818 / JCM 13857 / NBRC 105044 / CNB-440).